The sequence spans 254 residues: Bidirectional sugar transporter SWEET6b (254 aa).

The Extracellular segment spans residues 1 to 9; sequence MISPDAARN. A helical transmembrane segment spans residues 10 to 30; that stretch reads VVGIIGNVISFGLFLAPVPTF. A MtN3/slv 1 domain is found at 10–98; it reads VVGIIGNVIS…IFFLYSPNKK (89 aa). At 31–45 the chain is on the cytoplasmic side; sequence WRICKRKDVEEFKAD. Residues 46–66 traverse the membrane as a helical segment; that stretch reads PYLATLLNCMLWVFYGIPIVH. Residues 67-69 lie on the Extracellular side of the membrane; it reads PNS. A helical transmembrane segment spans residues 70–90; the sequence is ILVVTINGIGLVVEGTYLFIF. At 91-101 the chain is on the cytoplasmic side; it reads FLYSPNKKRLR. Residues 102–122 traverse the membrane as a helical segment; sequence MLAVLGVELVFMLAVILGVLL. The Extracellular portion of the chain corresponds to 123 to 131; it reads GAHTHKKRS. A helical transmembrane segment spans residues 132–152; the sequence is MIVGILCVFFGSIMYFSPLTI. A MtN3/slv 2 domain is found at 133–216; the sequence is IVGILCVFFG…LILYACYYRT (84 aa). Residues 153–165 lie on the Cytoplasmic side of the membrane; sequence MGKVIKTKSVEYM. The chain crosses the membrane as a helical span at residues 166-186; it reads PFFLSLVCFLNGVCWTAYALI. Over 187–189 the chain is Extracellular; sequence RFD. The helical transmembrane segment at 190-210 threads the bilayer; the sequence is IYVTIPNSLGAIFGAIQLILY. The Cytoplasmic segment spans residues 211–254; sequence ACYYRTTPKKTKAAKDVEMPSVISGPGAAATASGGSVVSVTVER.

Belongs to the SWEET sugar transporter family. As to quaternary structure, forms homooligomers and/or heterooligomers.

It is found in the cell membrane. Mediates both low-affinity uptake and efflux of sugar across the plasma membrane. In Oryza sativa subsp. indica (Rice), this protein is Bidirectional sugar transporter SWEET6b (SWEET6B).